The following is a 628-amino-acid chain: Chaperone protein DnaK (628 aa).

At threonine 174 the chain carries Phosphothreonine; by autocatalysis. The segment at 589-628 (AAGGAGPDMGAGAGPDMGAGASNGSAPYGDDVVDGDYKEV) is disordered. The span at 591 to 605 (GGAGPDMGAGAGPDM) shows a compositional bias: gly residues.

It belongs to the heat shock protein 70 family.

Its function is as follows. Acts as a chaperone. The chain is Chaperone protein DnaK from Lachnospira eligens (strain ATCC 27750 / DSM 3376 / VPI C15-48 / C15-B4) (Eubacterium eligens).